We begin with the raw amino-acid sequence, 186 residues long: Ion-translocating oxidoreductase complex subunit B (186 aa).

A hydrophobic region spans residues 1-23 (MLTPILALTALALIAGALLGFAA). A 4Fe-4S domain is found at 29 to 88 (EGNPIADQVDAVLPQTQCGQCGFGGCRPYAEAIAAGEAEINRCPPGGQDTVQTLADLLGV). [4Fe-4S] cluster is bound by residues C46, C49, C54, C71, C114, C117, C120, C124, C144, C147, C150, and C154. 4Fe-4S ferredoxin-type domains are found at residues 105-134 (QVAWVDEAVCIGCTRCIQACPVDAILGAAK) and 135-164 (QMHTVLKGECTGCGLCVDPCPVDCIHMVPV).

This sequence belongs to the 4Fe4S bacterial-type ferredoxin family. RnfB subfamily. In terms of assembly, the complex is composed of six subunits: RnfA, RnfB, RnfC, RnfD, RnfE and RnfG. The cofactor is [4Fe-4S] cluster.

The protein localises to the cell inner membrane. In terms of biological role, part of a membrane-bound complex that couples electron transfer with translocation of ions across the membrane. The chain is Ion-translocating oxidoreductase complex subunit B from Alkalilimnicola ehrlichii (strain ATCC BAA-1101 / DSM 17681 / MLHE-1).